The following is a 333-amino-acid chain: Protein-methionine-sulfoxide reductase catalytic subunit MsrP (333 aa).

Residues 1–43 (MSKQRKLTEADVTPESVFYQRRKVLQALGITAASLALPHNAQA) constitute a signal peptide (tat-type signal). Mo-molybdopterin contacts are provided by residues Asn87, 90–91 (YE), Cys145, Thr180, Asn232, Arg237, and 248–250 (GIK).

It belongs to the MsrP family. In terms of assembly, heterodimer of a catalytic subunit (MsrP) and a heme-binding subunit (MsrQ). Mo-molybdopterin is required as a cofactor. In terms of processing, predicted to be exported by the Tat system. The position of the signal peptide cleavage has not been experimentally proven.

The protein localises to the periplasm. The enzyme catalyses L-methionyl-[protein] + a quinone + H2O = L-methionyl-(S)-S-oxide-[protein] + a quinol. The catalysed reaction is L-methionyl-[protein] + a quinone + H2O = L-methionyl-(R)-S-oxide-[protein] + a quinol. Its function is as follows. Part of the MsrPQ system that repairs oxidized periplasmic proteins containing methionine sulfoxide residues (Met-O), using respiratory chain electrons. Thus protects these proteins from oxidative-stress damage caused by reactive species of oxygen and chlorine generated by the host defense mechanisms. MsrPQ is essential for the maintenance of envelope integrity under bleach stress, rescuing a wide series of structurally unrelated periplasmic proteins from methionine oxidation. The catalytic subunit MsrP is non-stereospecific, being able to reduce both (R-) and (S-) diastereoisomers of methionine sulfoxide. The polypeptide is Protein-methionine-sulfoxide reductase catalytic subunit MsrP (Serratia proteamaculans (strain 568)).